Here is a 63-residue protein sequence, read N- to C-terminus: UPF0434 protein Sde_1297 (63 aa).

It belongs to the UPF0434 family.

In Saccharophagus degradans (strain 2-40 / ATCC 43961 / DSM 17024), this protein is UPF0434 protein Sde_1297.